A 524-amino-acid polypeptide reads, in one-letter code: Apoptosis inhibitor 5-A (524 aa).

An ARM-like and Heat-like helical repeats region spans residues 1 to 360 (MATVEELYRS…HQLGRKLPDF (360 aa)). The segment at 440 to 524 (TLSWKPVQRT…RGNRSRGRIY (85 aa)) is disordered. Residues 455–476 (KRTSDETSSTSPPKKPIVGPKR) carry the Nuclear localization signal motif. The segment covering 503–516 (GFQGGRGRGWGGRG) has biased composition (gly residues).

This sequence belongs to the API5 family. Monomer.

The protein resides in the nucleus. May be an antiapoptotic factor. The protein is Apoptosis inhibitor 5-A (api5-a) of Xenopus laevis (African clawed frog).